Reading from the N-terminus, the 548-residue chain is Glucose-6-phosphate isomerase (548 aa).

Residue glutamate 353 is the Proton donor of the active site. Active-site residues include histidine 384 and lysine 512.

This sequence belongs to the GPI family.

It localises to the cytoplasm. The enzyme catalyses alpha-D-glucose 6-phosphate = beta-D-fructose 6-phosphate. Its pathway is carbohydrate biosynthesis; gluconeogenesis. It functions in the pathway carbohydrate degradation; glycolysis; D-glyceraldehyde 3-phosphate and glycerone phosphate from D-glucose: step 2/4. Catalyzes the reversible isomerization of glucose-6-phosphate to fructose-6-phosphate. This Chlorobium chlorochromatii (strain CaD3) protein is Glucose-6-phosphate isomerase.